A 1706-amino-acid chain; its full sequence is Serine/threonine-protein kinase vps15 (1706 aa).

In terms of domain architecture, Protein kinase spans 24–293; sequence YHNERSLGDS…YLQKYRGTVF (270 aa). Residues 30–38 and Lys-52 each bind ATP; that span reads LGDSHFLRT. The HEAT 1 repeat unit spans residues 56–94; sequence NKLPEISLSSIVNLLKEEQENISYRVPNAVPYIKTLVTL. The active-site Proton acceptor is the Asp-146. HEAT repeat units follow at residues 426-465, 466-504, 511-549, 587-625, 626-664, 665-703, and 705-743; these read LYGA…NICD, ESKL…NVTS, FLFQ…QASK, HDLV…FFGK, AKSN…FIGP, RSVD…LHLF, and KLVV…SFDD. At Ser-957 the chain carries Phosphoserine. Tyr-958 bears the Phosphotyrosine mark. Positions 982 to 1099 are disordered; that stretch reads TTKPKDVSQS…GKSLAPLISS (118 aa). Basic and acidic residues-rich tracts occupy residues 984-1002 and 1014-1023; these read KPKD…RESN and DVYRQTDNPE. The span at 1029–1055 shows a compositional bias: polar residues; it reads DTASSKVDTHNPTVTQPTDDTGGLNSY. Residues 1056-1069 are compositionally biased toward low complexity; sequence NTENPLLTNNTLEP. The segment covering 1079–1090 has biased composition (basic and acidic residues); it reads KDSDKHAKESKG. WD repeat units lie at residues 1213-1252 and 1368-1407; these read LLDG…RHIS and LQCG…LSCS. The span at 1431–1442 shows a compositional bias: polar residues; that stretch reads NEYTSGNNNSPV. The segment at 1431–1461 is disordered; sequence NEYTSGNNNSPVTKVPGSSSTSSSSTQPINS. One copy of the WD 3 repeat lies at 1577-1622; sequence CISSPIYRYRGPSAGSVEREPLFLIAASGSPHAFIWNPHNVSASSS.

Belongs to the protein kinase superfamily. Ser/Thr protein kinase family. In terms of assembly, component of the autophagy-specific vps34 PI3-kinase complex I composed of vps15, atg6, pik3/vps34, atg14 and atg38. Also a component of the vps34 PI3-kinase complex II composed of atg6, pik3, vps15 and vps38.

The catalysed reaction is L-seryl-[protein] + ATP = O-phospho-L-seryl-[protein] + ADP + H(+). The enzyme catalyses L-threonyl-[protein] + ATP = O-phospho-L-threonyl-[protein] + ADP + H(+). Functionally, functions as a part of the autophagy-specific VPS34 PI3-kinase complex I that plays a role in autophagosome assembly. This complex is essential to recruit the atg8-phosphatidylinositol conjugate and the atg12-atg5 conjugate to the pre-autophagosomal structure. Also functions as part of the VPS34 PI3-kinase complex II. The sequence is that of Serine/threonine-protein kinase vps15 from Schizosaccharomyces pombe (strain 972 / ATCC 24843) (Fission yeast).